The primary structure comprises 181 residues: Oligoribonuclease (181 aa).

Residues 8–171 enclose the Exonuclease domain; that stretch reads LIWIDLEMTG…DDIRESVGEL (164 aa). Tyrosine 129 is a catalytic residue.

It belongs to the oligoribonuclease family.

The protein localises to the cytoplasm. Functionally, 3'-to-5' exoribonuclease specific for small oligoribonucleotides. This Serratia proteamaculans (strain 568) protein is Oligoribonuclease.